Here is a 1061-residue protein sequence, read N- to C-terminus: Transmembrane protease serine 9 (1061 aa).

Over 3–31 (PAAPDLQPVPEVTKGVPVPTPDSGCCRAA) the chain is Cytoplasmic. Residues 32 to 52 (VTTVVAISVASLTLGVLSAFL) traverse the membrane as a helical segment. The Extracellular portion of the chain corresponds to 53 to 1061 (SAQGVQVEHT…LGWIGQNIRE (1009 aa)). Positions 155–192 (HCPGNAFSCQNSQCVSKENPECDDRVDCSDGSDEAQCD) constitute an LDL-receptor class A domain. Cystine bridges form between Cys-156-Cys-168, Cys-163-Cys-182, Cys-176-Cys-191, and Cys-230-Cys-246. The region spanning 205 to 438 (IVGGAEAAPG…LRDWILEVTS (234 aa)) is the Peptidase S1 1 domain. Catalysis depends on charge relay system residues His-245 and Asp-294. 3 disulfide bridges follow: Cys-328/Cys-395, Cys-360/Cys-374, and Cys-385/Cys-414. The active-site Charge relay system is the Ser-389. The segment at 443 to 499 (PVVPTEAPAPITPSTPWPTSPESRVPNTTAKPTVAPTPAPLHPSTAAKPQECGARPA) is disordered. A compositionally biased stretch (pro residues) spans 452-461 (PITPSTPWPT). Positions 462 to 476 (SPESRVPNTTAKPTV) are enriched in low complexity. An N-linked (GlcNAc...) asparagine glycan is attached at Asn-469. Positions 506-738 (IVGGISAVSG…LKDWILKAMS (233 aa)) constitute a Peptidase S1 2 domain. A disulfide bridge links Cys-531 with Cys-547. Catalysis depends on His-546, which acts as the Charge relay system. The N-linked (GlcNAc...) asparagine glycan is linked to Asn-549. Residue Asp-594 is the Charge relay system of the active site. Intrachain disulfides connect Cys-628–Cys-695, Cys-660–Cys-674, and Cys-685–Cys-714. N-linked (GlcNAc...) asparagine glycans are attached at residues Asn-640 and Asn-665. Ser-689 acts as the Charge relay system in catalysis. Residues 740–752 (DPSSTAHPHTSST) show a composition bias toward low complexity. Disordered stretches follow at residues 740-771 (DPSS…IPEA) and 790-810 (LNTT…APGT). The N-linked (GlcNAc...) asparagine glycan is linked to Asn-791. Over residues 792–808 (TTLSARSTTTRRQTPAP) the composition is skewed to low complexity. Residues 830 to 1060 (IVGGSAASLG…VLGWIGQNIR (231 aa)) form the Peptidase S1 3 domain. 4 disulfide bridges follow: Cys-856–Cys-872, Cys-951–Cys-1017, Cys-982–Cys-996, and Cys-1007–Cys-1036.

The protein belongs to the peptidase S1 family. Post-translationally, proteolytically cleaved to generate 3 independent serine protease chains. The cleaved chains may remain attached to the membrane thanks to disulfide bonds. It is unclear whether cleavage always takes place.

It is found in the cell membrane. Its activity is regulated as follows. Inhibited by serine protease inhibitors PMSF and 4-(2-aminoethyl)benzenesulfonyl fluoride, but not by EDTA. Serase-1 and serase-2 are serine proteases that hydrolyze the peptides N-t-Boc-Gln-Ala-Arg-AMC and N-t-Boc-Gln-Gly-Arg-AMC. In contrast, N-t-Boc-Ala-Phe-Lys-AMC and N-t-Boc-Ala-Pro-Ala-AMC are not significantly hydrolyzed. This is Transmembrane protease serine 9 (Tmprss9) from Rattus norvegicus (Rat).